Consider the following 266-residue polypeptide: Undecaprenyl-diphosphatase (266 aa).

Transmembrane regions (helical) follow at residues 1-21 (MTLT…FLPI), 39-59 (QGLA…MIYF), 87-107 (WWVI…KAFI), 111-131 (ARSA…LWYA), 150-172 (LIVG…ITMT), 187-207 (FSFL…TLDL), 218-238 (ALIV…YLFL), and 244-264 (IGML…LLFV).

The protein belongs to the UppP family.

The protein localises to the cell inner membrane. It carries out the reaction di-trans,octa-cis-undecaprenyl diphosphate + H2O = di-trans,octa-cis-undecaprenyl phosphate + phosphate + H(+). Catalyzes the dephosphorylation of undecaprenyl diphosphate (UPP). Confers resistance to bacitracin. The sequence is that of Undecaprenyl-diphosphatase from Pseudoalteromonas atlantica (strain T6c / ATCC BAA-1087).